The primary structure comprises 54 residues: Large ribosomal subunit protein bL32c (54 aa).

This sequence belongs to the bacterial ribosomal protein bL32 family.

It localises to the plastid. The protein localises to the chloroplast. In Lactuca sativa (Garden lettuce), this protein is Large ribosomal subunit protein bL32c.